A 679-amino-acid polypeptide reads, in one-letter code: Glycine--tRNA ligase beta subunit (679 aa).

This sequence belongs to the class-II aminoacyl-tRNA synthetase family. As to quaternary structure, tetramer of two alpha and two beta subunits.

It localises to the cytoplasm. It carries out the reaction tRNA(Gly) + glycine + ATP = glycyl-tRNA(Gly) + AMP + diphosphate. In Streptococcus pyogenes serotype M12 (strain MGAS9429), this protein is Glycine--tRNA ligase beta subunit.